We begin with the raw amino-acid sequence, 515 residues long: tRNA-2-methylthio-N(6)-dimethylallyladenosine synthase (515 aa).

Residues 25–140 (KTYQVRTFGC…LPALLNRARH (116 aa)) enclose the MTTase N-terminal domain. Residues C34, C69, C103, C177, C181, and C184 each coordinate [4Fe-4S] cluster. The Radical SAM core domain occupies 163–393 (RDSVYAGWVS…TALQDRIAAE (231 aa)). Residues 396–466 (AKQLGRKVEV…AFHLVADPAG (71 aa)) enclose the TRAM domain. Residues 482–515 (DRSQADSCGVPAAGAASGKAGVSLGMPSLPTRRA) are disordered. The span at 490-506 (GVPAAGAASGKAGVSLG) shows a compositional bias: low complexity.

Belongs to the methylthiotransferase family. MiaB subfamily. Monomer. Requires [4Fe-4S] cluster as cofactor.

Its subcellular location is the cytoplasm. It carries out the reaction N(6)-dimethylallyladenosine(37) in tRNA + (sulfur carrier)-SH + AH2 + 2 S-adenosyl-L-methionine = 2-methylsulfanyl-N(6)-dimethylallyladenosine(37) in tRNA + (sulfur carrier)-H + 5'-deoxyadenosine + L-methionine + A + S-adenosyl-L-homocysteine + 2 H(+). In terms of biological role, catalyzes the methylthiolation of N6-(dimethylallyl)adenosine (i(6)A), leading to the formation of 2-methylthio-N6-(dimethylallyl)adenosine (ms(2)i(6)A) at position 37 in tRNAs that read codons beginning with uridine. This chain is tRNA-2-methylthio-N(6)-dimethylallyladenosine synthase, found in Paenarthrobacter aurescens (strain TC1).